A 209-amino-acid chain; its full sequence is Protein-L-isoaspartate O-methyltransferase (209 aa).

The active site involves Ser59.

Belongs to the methyltransferase superfamily. L-isoaspartyl/D-aspartyl protein methyltransferase family.

The protein localises to the cytoplasm. The enzyme catalyses [protein]-L-isoaspartate + S-adenosyl-L-methionine = [protein]-L-isoaspartate alpha-methyl ester + S-adenosyl-L-homocysteine. In terms of biological role, catalyzes the methyl esterification of L-isoaspartyl residues in peptides and proteins that result from spontaneous decomposition of normal L-aspartyl and L-asparaginyl residues. It plays a role in the repair and/or degradation of damaged proteins. The chain is Protein-L-isoaspartate O-methyltransferase from Helicobacter pylori (strain P12).